Reading from the N-terminus, the 140-residue chain is Endoribonuclease YbeY (140 aa).

Residues His99, His103, and His109 each coordinate Zn(2+).

Belongs to the endoribonuclease YbeY family. Requires Zn(2+) as cofactor.

The protein resides in the cytoplasm. In terms of biological role, single strand-specific metallo-endoribonuclease involved in late-stage 70S ribosome quality control and in maturation of the 3' terminus of the 16S rRNA. This chain is Endoribonuclease YbeY, found in Wolinella succinogenes (strain ATCC 29543 / DSM 1740 / CCUG 13145 / JCM 31913 / LMG 7466 / NCTC 11488 / FDC 602W) (Vibrio succinogenes).